A 316-amino-acid polypeptide reads, in one-letter code: Peroxidase 67 (316 aa).

The signal sequence occupies residues methionine 1–alanine 19. Position 20 is a pyrrolidone carboxylic acid (glutamine 20). Cystine bridges form between cysteine 30/cysteine 110, cysteine 63/cysteine 68, cysteine 116/cysteine 312, and cysteine 196/cysteine 221. The active-site Proton acceptor is histidine 61. Ca(2+) is bound by residues aspartate 62, valine 65, glycine 67, aspartate 69, and serine 71. Proline 159 provides a ligand contact to substrate. Histidine 189 lines the heme b pocket. Threonine 190 is a Ca(2+) binding site. An N-linked (GlcNAc...) asparagine glycan is attached at asparagine 205. Aspartate 236, serine 239, and aspartate 244 together coordinate Ca(2+).

It belongs to the peroxidase family. Classical plant (class III) peroxidase subfamily. Requires heme b as cofactor. The cofactor is Ca(2+).

The protein resides in the secreted. The catalysed reaction is 2 a phenolic donor + H2O2 = 2 a phenolic radical donor + 2 H2O. Its function is as follows. Removal of H(2)O(2), oxidation of toxic reductants, biosynthesis and degradation of lignin, suberization, auxin catabolism, response to environmental stresses such as wounding, pathogen attack and oxidative stress. These functions might be dependent on each isozyme/isoform in each plant tissue. This is Peroxidase 67 (PER67) from Arabidopsis thaliana (Mouse-ear cress).